The primary structure comprises 349 residues: Cobalt-precorrin-5B C(1)-methyltransferase (349 aa).

This sequence belongs to the CbiD family.

It carries out the reaction Co-precorrin-5B + S-adenosyl-L-methionine = Co-precorrin-6A + S-adenosyl-L-homocysteine. The protein operates within cofactor biosynthesis; adenosylcobalamin biosynthesis; cob(II)yrinate a,c-diamide from sirohydrochlorin (anaerobic route): step 6/10. Catalyzes the methylation of C-1 in cobalt-precorrin-5B to form cobalt-precorrin-6A. This chain is Cobalt-precorrin-5B C(1)-methyltransferase, found in Saccharolobus islandicus (strain L.S.2.15 / Lassen #1) (Sulfolobus islandicus).